The primary structure comprises 169 residues: Phycobiliprotein beta chain (169 aa).

Asparagine 72 is subject to N4-methylasparagine. (2R,3E)-phycocyanobilin is bound at residue cysteine 82.

Belongs to the phycobiliprotein family. In terms of assembly, heterodimer of an alpha and a beta chain. In terms of processing, contains one covalently linked bilin chromophore.

It localises to the cellular thylakoid membrane. Light-harvesting photosynthetic bile pigment-protein from the phycobiliprotein complex. This is a protein functionally equivalent to, but with weaker absorbance than, allophycocyanin beta chain. This is Phycobiliprotein beta chain (apcD) from Mastigocladus laminosus (Fischerella sp.).